Consider the following 398-residue polypeptide: tRNA pseudouridine synthase D (398 aa).

Asp76 functions as the Nucleophile in the catalytic mechanism. The TRUD domain maps to 151 to 361 (GVPNRFGVQR…MEGERRPLRV (211 aa)).

It belongs to the pseudouridine synthase TruD family.

The enzyme catalyses uridine(13) in tRNA = pseudouridine(13) in tRNA. Its function is as follows. Responsible for synthesis of pseudouridine from uracil-13 in transfer RNAs. The polypeptide is tRNA pseudouridine synthase D (Geobacter sp. (strain M21)).